The sequence spans 67 residues: Retron Se72 cold shock-like protein (67 aa).

One can recognise a CSD domain in the interval Met1 to Lys66.

Functionally, probable cold shock-like component of antiviral defense system retron Se72, composed of a non-coding RNA (ncRNA), a reverse transcriptase (RT) and this protein. Expression of retron Se72 confers protection against bacteriophage lambda. At multiplicity of infection (MOI) of 0.02 cultures slow growth when infected with lambda but do not collapse, at MOI 2 cultures enter growth stasis. The sequence is that of Retron Se72 cold shock-like protein from Salmonella heidelberg (strain 579083-10).